A 177-amino-acid chain; its full sequence is Large ribosomal subunit protein uL6 (177 aa).

It belongs to the universal ribosomal protein uL6 family. As to quaternary structure, part of the 50S ribosomal subunit.

This protein binds to the 23S rRNA, and is important in its secondary structure. It is located near the subunit interface in the base of the L7/L12 stalk, and near the tRNA binding site of the peptidyltransferase center. The polypeptide is Large ribosomal subunit protein uL6 (Thioalkalivibrio sulfidiphilus (strain HL-EbGR7)).